The sequence spans 1403 residues: MPKEEDFQLPRRREAAKNVNYNEMEIDTKLVQQIQIAEKSGAKTKGSNSQTPRNCKRTSNPASRNEKFKYQKFLHDKNTCWNFIPTLPPSFRKNSRFSNILDLDDAMIDLKKMSLFNTESVLLSANDTIYMISEPAGEPYYVGRVVNFVSKPEFSNTIHEAIKTTSVFPAKFFQVRMNWFYRPRDIQEHVNTFNPRLVYASLHQDICPISSYRGKCSIFHKDEVFDVLPNEKECIIRPNIFYFDELFDRYTLKYYKVYSTDKILNKWNSKSPFLYVLNRRFRYIYTEPKYPLENVLKKYVFHELEVNELSPADYQWDKRCQFCKEWCIQKESLSCDECGVCAHLYCMDPPLDRKPNKDVVWTCFSCLQKQQGTKDSHVRFLEEQALELDFIRSVRQKIEEISSKAIKENVGYNTENCWFQYLGIYSISHIGDALNDSMFFPYPFKPSRVGVKYQWNGCNHNVPWRRNSYISANSEEERGSTKTSELAWVLDASKITTRKLSEYIEQCKSEICPILNVRGETCNFIDVVLKNLLFTNYDTAEAFKKCKRELSRKFLKEPSFTAVEIRKFEEAVEKFGSELRPVCEYVGTQPMSMIVRFYYNWKKTERGLTVRGKLSKLSKNKRKKEIANHENDVETKYIDDSSFDTEKLSLAESSFQCMFCKTDYSPMWYRVTGGSDDEKIKIRMQTGVNEKTEISEKSPAHSKKNEKLGALCIRCARMWRRYAIKWVPPLETLRKITGTCQNSFYSAIEGIIEENNTNKFTLSPFQAHNKLLEWELVQDSELIIRQRMKVYKNPNSFVKMKRYSMTFHTQLYKMAVRSYRKNEFHPETMQRDLELFIEDNKEVRKAIPEQKPERAKNTKDEFPVNIIRQSPGTIKTSDTSRNRKCNDVFIEKASNNNIPKITNASNDLIEISIKTGGSSSGSVSVDKGFKFVKFDNKTFQRLRNSLKLVNNKLPKYNEPSTKKIKMINDIALSNPLNEPNGASYNYTVISHSKETSVALEKYHDGNKPSKMLEKDMILKHTKNKPKNPDTAWANNSARTFCSVCKEKFNDNDNYEVVCGNCGLTVHYFCYAIKLPKDMKKNTNLKTFKWLCDPCSNDLNPIISTTYQCSMCPTKDYDYDRYRSQSFKICPDALKCTSLGTWVHLVCSLFNEDIKYGNGQSMQPALNTTAVLIKHSRFTCGVCRINGGGLVKCNKCQYRYHITCAQNSSNFKLMFEKKNMSVDTTLPCIKDVKLNDTYTLRPILICDRHDISLEGNELYPLSYKPQHTLSYIEQYCRYYKCESDHSLVELRYFEQLRLRHGEMPGNSHDSAIKPKIYVLPFERTCPHCGTNKSLYWYEDIICHSCNLRSGAQELDFDSASANISNDNGLPVEITQQLMEGIEPAMFDIDISEAGTDKNTHPSSQ.

The segment at Ser40–Ala62 is disordered. The segment covering Lys45 to Ala62 has biased composition (polar residues). Residues Val121–Tyr258 form the BAH domain. The PHD-type 1 zinc-finger motif lies at Asp317–Lys369. Residues Leu555–Arg606 enclose the SANT domain. The segment at Arg1038–Asp1097 adopts a PHD-type 2 zinc-finger fold. An RING-type; degenerate zinc finger spans residues Cys1041–Ser1095. A C2HC pre-PHD-type zinc finger spans residues Thr1105–Ile1153. Residues Phe1177–Val1231 form a PHD-type 3; degenerate zinc finger.

As to quaternary structure, component of the Snt2C complex composed of SNT2, ECM5 and RPD3. Interacts with the E2 ubiquitin-conjugating enzyme UBC4 and histones H3 and H4. Binding is enhanced to methylated histone H3K36me3.

It is found in the cytoplasm. The protein resides in the nucleus. It catalyses the reaction S-ubiquitinyl-[E2 ubiquitin-conjugating enzyme]-L-cysteine + [acceptor protein]-L-lysine = [E2 ubiquitin-conjugating enzyme]-L-cysteine + N(6)-ubiquitinyl-[acceptor protein]-L-lysine.. Transcriptional regulator that, together with ECM5, recruits histone deacetylase RPD3 to a small number of promoters of stress-response genes in response to oxidative stress. Probable ubiquitin-protein ligase involved in the degradation-related ubiquitination of histones. Contributes to the post-translational regulation of histone protein levels by polyubiquitination of excess histones for subsequent degradation. This chain is E3 ubiquitin-protein ligase SNT2, found in Saccharomyces cerevisiae (strain ATCC 204508 / S288c) (Baker's yeast).